The chain runs to 431 residues: Serine hydroxymethyltransferase (431 aa).

(6S)-5,6,7,8-tetrahydrofolate is bound by residues L128 and 132 to 134; that span reads GHL. An N6-(pyridoxal phosphate)lysine modification is found at K237.

This sequence belongs to the SHMT family. Homodimer. Pyridoxal 5'-phosphate serves as cofactor.

The protein localises to the cytoplasm. The catalysed reaction is (6R)-5,10-methylene-5,6,7,8-tetrahydrofolate + glycine + H2O = (6S)-5,6,7,8-tetrahydrofolate + L-serine. It participates in one-carbon metabolism; tetrahydrofolate interconversion. It functions in the pathway amino-acid biosynthesis; glycine biosynthesis; glycine from L-serine: step 1/1. Its function is as follows. Catalyzes the reversible interconversion of serine and glycine with tetrahydrofolate (THF) serving as the one-carbon carrier. This reaction serves as the major source of one-carbon groups required for the biosynthesis of purines, thymidylate, methionine, and other important biomolecules. Also exhibits THF-independent aldolase activity toward beta-hydroxyamino acids, producing glycine and aldehydes, via a retro-aldol mechanism. This chain is Serine hydroxymethyltransferase, found in Ruegeria pomeroyi (strain ATCC 700808 / DSM 15171 / DSS-3) (Silicibacter pomeroyi).